A 20-amino-acid chain; its full sequence is Protein YfiS (20 aa).

This Escherichia coli (strain K12) protein is Protein YfiS.